Consider the following 97-residue polypeptide: MSLLTEVETPTRNGWECKCSDSSDPLVIAASIIGILHLILWILDRLFFKCIYRRLKYGLKRGPSTEGVPESMREEYRQEQQSAVDVDDGHFVNIELE.

Topologically, residues 1 to 22 (MSLLTEVETPTRNGWECKCSDS) are virion surface. The helical; Signal-anchor for type III membrane protein transmembrane segment at 23–43 (SDPLVIAASIIGILHLILWIL) threads the bilayer. Over 44–97 (DRLFFKCIYRRLKYGLKRGPSTEGVPESMREEYRQEQQSAVDVDDGHFVNIELE) the chain is Intravirion. Cys50 carries the S-palmitoyl cysteine; by host lipid modification. The tract at residues 60 to 83 (KRGPSTEGVPESMREEYRQEQQSA) is disordered. Phosphoserine; by host is present on residues Ser64 and Ser82.

The protein belongs to the influenza viruses matrix protein M2 family. Homotetramer; composed of two disulfide-linked dimers held together by non-covalent interactions. May interact with matrix protein 1.

The protein resides in the virion membrane. The protein localises to the host apical cell membrane. The M2 protein from most influenza A strains is inhibited by amantadine and rimantadine, resulting in viral uncoating incapacity. Emergence of amantadine-resistant variants is usually rapid. Its function is as follows. Forms a proton-selective ion channel that is necessary for the efficient release of the viral genome during virus entry. After attaching to the cell surface, the virion enters the cell by endocytosis. Acidification of the endosome triggers M2 ion channel activity. The influx of protons into virion interior is believed to disrupt interactions between the viral ribonucleoprotein (RNP), matrix protein 1 (M1), and lipid bilayers, thereby freeing the viral genome from interaction with viral proteins and enabling RNA segments to migrate to the host cell nucleus, where influenza virus RNA transcription and replication occur. Also plays a role in viral proteins secretory pathway. Elevates the intravesicular pH of normally acidic compartments, such as trans-Golgi network, preventing newly formed hemagglutinin from premature switching to the fusion-active conformation. This chain is Matrix protein 2, found in Influenza A virus (strain A/Turkey/Oregon/1971 H7N3).